A 680-amino-acid chain; its full sequence is DNA-directed RNA polymerase subunit beta' (680 aa).

Positions 69, 71, 87, and 90 each coordinate Zn(2+). Positions 489, 491, and 493 each coordinate Mg(2+).

This sequence belongs to the RNA polymerase beta' chain family. RpoC1 subfamily. In terms of assembly, in plastids the minimal PEP RNA polymerase catalytic core is composed of four subunits: alpha, beta, beta', and beta''. When a (nuclear-encoded) sigma factor is associated with the core the holoenzyme is formed, which can initiate transcription. Mg(2+) is required as a cofactor. Requires Zn(2+) as cofactor.

Its subcellular location is the plastid. It localises to the chloroplast. It catalyses the reaction RNA(n) + a ribonucleoside 5'-triphosphate = RNA(n+1) + diphosphate. DNA-dependent RNA polymerase catalyzes the transcription of DNA into RNA using the four ribonucleoside triphosphates as substrates. The chain is DNA-directed RNA polymerase subunit beta' from Draba nemorosa (Woodland whitlowgrass).